The primary structure comprises 135 residues: Large ribosomal subunit protein uL16c (135 aa).

Positions 1–23 are enriched in basic residues; the sequence is MLSPKKTKFRKEHRGRMKGRSSR. The interval 1–24 is disordered; it reads MLSPKKTKFRKEHRGRMKGRSSRG.

It belongs to the universal ribosomal protein uL16 family. Part of the 50S ribosomal subunit.

The protein resides in the plastid. It localises to the chloroplast. The sequence is that of Large ribosomal subunit protein uL16c from Pelargonium hortorum (Common geranium).